We begin with the raw amino-acid sequence, 121 residues long: Acidic phospholipase A2 SpII RP4 (121 aa).

7 disulfide bridges follow: Cys-25–Cys-114, Cys-27–Cys-43, Cys-42–Cys-94, Cys-48–Cys-121, Cys-49–Cys-87, Cys-56–Cys-80, and Cys-74–Cys-85. Residues Tyr-26, Gly-28, and Gly-30 each contribute to the Ca(2+) site. His-46 is an active-site residue. Asp-47 is a binding site for Ca(2+). Residue Asp-88 is part of the active site.

Requires Ca(2+) as cofactor. As to expression, expressed by the venom gland.

It is found in the secreted. The enzyme catalyses a 1,2-diacyl-sn-glycero-3-phosphocholine + H2O = a 1-acyl-sn-glycero-3-phosphocholine + a fatty acid + H(+). Functionally, snake venom phospholipase A2 (PLA2) which exhibits indirect hemolysis, induces mild edema inflammation in the foot pads of mice and slightly delays anticoagulant activities. In mice, not lethal, even at the highest dose, and exhibits low to moderate myotoxicity on muscular fibers. PLA2 catalyzes the calcium-dependent hydrolysis of the 2-acyl groups in 3-sn-phosphoglycerides. This chain is Acidic phospholipase A2 SpII RP4, found in Bothrops alternatus (Urutu).